The primary structure comprises 296 residues: Maltose/maltodextrin transport system permease protein MalG (296 aa).

The Cytoplasmic segment spans residues 1 to 12 (MAMVQPKSQKLR). Residues 13–35 (LLITHLGLLIFIAAIMFPLLMVI) form a helical membrane-spanning segment. Over 36-88 (AISLREGNFATGSLIPDKISWEHWRLALGFSVEHADGRVTPPPFPVLLWLWNS) the chain is Periplasmic. One can recognise an ABC transmembrane type-1 domain in the interval 85 to 281 (LWNSVKIAGI…IPITLVFLLA (197 aa)). A helical transmembrane segment spans residues 89 to 111 (VKIAGITAIGIVALSTTCAYAFA). The Cytoplasmic segment spans residues 112 to 123 (RMRFPGKATLLK). Residues 124-143 (GMLIFQMFPAVLSLVALYAL) form a helical membrane-spanning segment. Topologically, residues 144–152 (FDRLGQYIP) are periplasmic. The chain crosses the membrane as a helical span at residues 153–175 (FIGLNTHGGVIFAYLGGIALHVW). Topologically, residues 176–204 (TIKGYFETIDSSLEEAAALDGATPWQAFR) are cytoplasmic. A helical membrane pass occupies residues 205–227 (LVLLPLSVPILAVVFILSFIAAI). The Periplasmic portion of the chain corresponds to 228–257 (TEVPVASLLLRDVDSYTLAVGMQQYLNPQN). A helical transmembrane segment spans residues 258 to 280 (YLWGDFAAAAVLSAIPITLVFLL). Over 281 to 296 (AQRWLVNGLTAGGVKG) the chain is Cytoplasmic.

The protein belongs to the binding-protein-dependent transport system permease family. MalFG subfamily. In terms of assembly, the complex is composed of two ATP-binding proteins (MalK), two transmembrane proteins (MalG and MalF) and a solute-binding protein (MalE).

It localises to the cell inner membrane. Its function is as follows. Part of the ABC transporter complex MalEFGK involved in maltose/maltodextrin import. Probably responsible for the translocation of the substrate across the membrane. This chain is Maltose/maltodextrin transport system permease protein MalG (malG), found in Salmonella typhimurium (strain LT2 / SGSC1412 / ATCC 700720).